Here is a 535-residue protein sequence, read N- to C-terminus: Bifunctional purine biosynthesis protein PurH (535 aa).

One can recognise an MGS-like domain in the interval 6 to 151; that stretch reads TRLPVRRALI…KNHKDVAIVV (146 aa).

The protein belongs to the PurH family.

It carries out the reaction (6R)-10-formyltetrahydrofolate + 5-amino-1-(5-phospho-beta-D-ribosyl)imidazole-4-carboxamide = 5-formamido-1-(5-phospho-D-ribosyl)imidazole-4-carboxamide + (6S)-5,6,7,8-tetrahydrofolate. The catalysed reaction is IMP + H2O = 5-formamido-1-(5-phospho-D-ribosyl)imidazole-4-carboxamide. Its pathway is purine metabolism; IMP biosynthesis via de novo pathway; 5-formamido-1-(5-phospho-D-ribosyl)imidazole-4-carboxamide from 5-amino-1-(5-phospho-D-ribosyl)imidazole-4-carboxamide (10-formyl THF route): step 1/1. The protein operates within purine metabolism; IMP biosynthesis via de novo pathway; IMP from 5-formamido-1-(5-phospho-D-ribosyl)imidazole-4-carboxamide: step 1/1. In Ectopseudomonas mendocina (strain ymp) (Pseudomonas mendocina), this protein is Bifunctional purine biosynthesis protein PurH.